Here is a 150-residue protein sequence, read N- to C-terminus: Urease accessory protein UreE (150 aa).

Belongs to the UreE family.

Its subcellular location is the cytoplasm. Involved in urease metallocenter assembly. Binds nickel. Probably functions as a nickel donor during metallocenter assembly. The chain is Urease accessory protein UreE from Staphylococcus aureus (strain MRSA252).